Reading from the N-terminus, the 912-residue chain is Cadherin-2 (912 aa).

The first 28 residues, 1–28, serve as a signal peptide directing secretion; it reads MCRIAGTPPRILPPLALMLLAALQQAPI. The propeptide occupies 29–164; sequence KATCEDMLCK…DSSHLKRQKR (136 aa). 5 Cadherin domains span residues 165–272, 273–387, 388–502, 503–609, and 610–720; these read DWVI…RPEF, LHQV…PPEF, TAMT…SPYF, VPNP…DNAP, and QVNP…DVDR. Topologically, residues 165-729 are extracellular; it reads DWVIPPINLP…RIVGAGLGTG (565 aa). Residues Glu175, Asp231, Glu233, Asp264, Met265, Asn266, Asp267, and Asn268 each contribute to the Ca(2+) site. N-linked (GlcNAc...) asparagine glycosylation is present at Asn278. 3 residues coordinate Ca(2+): Asp298, Asp300, and Asn306. The N-linked (GlcNAc...) asparagine glycan is linked to Asn330. Residue Asp358 participates in Ca(2+) binding. Asn407, Asn578, Asn628, and Asn657 each carry an N-linked (GlcNAc...) asparagine glycan. Residues 730–752 traverse the membrane as a helical segment; it reads AIIAILLCIIILLILVLMFVVWM. Residues 753-912 are Cytoplasmic-facing; it reads KRRDKERQAK…LADMYGGGDD (160 aa). Over residues 869-886 the composition is skewed to low complexity; that stretch reads SGSTAGSLSSLNSSSSGG. Positions 869–890 are disordered; it reads SGSTAGSLSSLNSSSSGGEQDY.

Homodimer (via extracellular region). Can also form heterodimers with other cadherins (via extracellular region). Dimerization occurs in trans, i.e. with a cadherin chain from another cell. Interacts with CTNNA2. As to expression, expressed at intercalated disks in the heart (at protein level).

Its subcellular location is the cell membrane. The protein resides in the sarcolemma. The protein localises to the cell junction. It localises to the cell surface. It is found in the desmosome. Its subcellular location is the adherens junction. Calcium-dependent cell adhesion protein; preferentially mediates homotypic cell-cell adhesion. Cadherins may thus contribute to the sorting of heterogeneous cell types, and thereby play an important role during embryonic development. Required for proper neurite branching, and pre- and postsynaptic organization. This chain is Cadherin-2 (CDH2), found in Gallus gallus (Chicken).